We begin with the raw amino-acid sequence, 1335 residues long: Xanthine dehydrogenase/oxidase (1335 aa).

One can recognise a 2Fe-2S ferredoxin-type domain in the interval 7–94 (DELVFFVNGK…HVAVTTVEGI (88 aa)). [2Fe-2S] cluster is bound by residues cysteine 46, cysteine 51, cysteine 54, cysteine 76, cysteine 115, cysteine 118, cysteine 150, and cysteine 152. The 186-residue stretch at 231-416 (FEGERVTWIQ…VSIVIPYSRK (186 aa)) folds into the FAD-binding PCMH-type domain. Residues 259–266 (LVVGNTEI), phenylalanine 339, 349–353 (SIGGN), aspartate 362, leucine 406, and lysine 424 contribute to the FAD site. A disulfide bridge links cysteine 538 with cysteine 995. 2 residues coordinate Mo-molybdopterin: glutamine 770 and phenylalanine 801. Residues glutamate 805 and arginine 883 each contribute to the substrate site. Arginine 915 contributes to the Mo-molybdopterin binding site. Residues phenylalanine 917 and threonine 1013 each contribute to the substrate site. Residue alanine 1082 coordinates Mo-molybdopterin. Glutamate 1264 serves as the catalytic Proton acceptor.

It belongs to the xanthine dehydrogenase family. In terms of assembly, homodimer. Interacts with BTN1A1. Requires FAD as cofactor. It depends on Mo-molybdopterin as a cofactor. [2Fe-2S] cluster is required as a cofactor. Post-translationally, subject to partial proteolysis; this alters the enzyme from the dehydrogenase form (D) to the oxidase form (O). In terms of processing, contains sulfhydryl groups that are easily oxidized (in vitro); this alters the enzyme from the dehydrogenase form (D) to the oxidase form (O).

It is found in the cytoplasm. It localises to the peroxisome. Its subcellular location is the secreted. It catalyses the reaction xanthine + NAD(+) + H2O = urate + NADH + H(+). The enzyme catalyses hypoxanthine + NAD(+) + H2O = xanthine + NADH + H(+). The catalysed reaction is xanthine + O2 + H2O = urate + H2O2. With respect to regulation, can be converted from the dehydrogenase form (D) to the oxidase form (O) irreversibly by proteolysis or reversibly through the oxidation of sulfhydryl groups. In terms of biological role, key enzyme in purine degradation. Catalyzes the oxidation of hypoxanthine to xanthine. Catalyzes the oxidation of xanthine to uric acid. Contributes to the generation of reactive oxygen species. This is Xanthine dehydrogenase/oxidase (Xdh) from Mus musculus (Mouse).